The primary structure comprises 763 residues: Probable portal protein (763 aa).

A compositionally biased stretch (basic and acidic residues) spans 668–679 (GTKHARDLEKMK). 2 disordered regions span residues 668 to 706 (GTKH…LPPN) and 729 to 763 (ERDI…RLGN). The segment covering 680–689 (AQSQGNQQLE) has biased composition (polar residues).

As to quaternary structure, homododecamer.

The protein resides in the virion. In terms of biological role, forms the portal vertex of the capsid. This portal plays critical roles in head assembly, genome packaging, neck/tail attachment, and genome ejection. The portal protein multimerizes as a single ring-shaped homododecamer arranged around a central channel. The protein is Probable portal protein (59) of Escherichia coli (Bacteriophage N4).